Here is a 261-residue protein sequence, read N- to C-terminus: Kallikrein 1-related peptidase b21 (261 aa).

The N-terminal stretch at 1–17 (MRFLILFLALSLGEIDA) is a signal peptide. Residues 18-24 (APPVQSR) constitute a propeptide, activation peptide. A Peptidase S1 domain is found at 25-258 (IVGGFNCEKN…FTSWIKDTMA (234 aa)). Intrachain disulfides connect C31-C173, C50-C66, C152-C219, C184-C198, and C209-C234. Catalysis depends on H65, which acts as the Charge relay system. The N-linked (GlcNAc...) asparagine glycan is linked to N102. The Charge relay system role is filled by D120. The active-site Charge relay system is S213.

Belongs to the peptidase S1 family. Kallikrein subfamily. In terms of tissue distribution, expressed in testis and submaxillary gland. In the testis, expression localized specifically to Leydig cells in the interstitial tissues.

The enzyme catalyses Preferential cleavage of Arg-|-Xaa bonds in small molecule substrates. Highly selective action to release kallidin (lysyl-bradykinin) from kininogen involves hydrolysis of Met-|-Xaa or Leu-|-Xaa.. Its activity is regulated as follows. Inhibited by protease inhibitors diisopropylfluorophosphate, leupeptin, antipain, benzamidine, phenylmethylsulfonyl fluoride and soybean trypsin inhibitor. Its function is as follows. Glandular kallikreins cleave Met-Lys and Arg-Ser bonds in kininogen to release Lys-bradykinin. Displays trypsin-like substrate specificity and shows activity towards casein, gelatin, fibronectin and IGFBP3. This chain is Kallikrein 1-related peptidase b21 (Klk1b21), found in Mus musculus (Mouse).